Here is a 299-residue protein sequence, read N- to C-terminus: MLFDQIARNKRKTWLLLLVFFLLLGLVGYGVGYLWLGSGFGGLILALVIGFIYAVTMIFQSTNVVMAMNGAREVDEQTAPNLYHVVEDMAMVAQIPMPRVFIVDDPSMNAFATGSSPKNAAVAATTGLLAVMNREELEGVIGHEVSHIRNYDIRISTIAVALASAITMLAVMARNMMFWGGGRRRNDDDRNGSSGLEIILLIISLIAIILAPLAATLVQLAISRQREFLADASSVELTRNPQGMINALLKLDNSAPMQHHVDDASAALFINDPKKESGLQKFFYTHPPISERVERLKQM.

A run of 2 helical transmembrane segments spans residues 14-34 (WLLLLVFFLLLGLVGYGVGYL) and 39-59 (GFGGLILALVIGFIYAVTMIF). His143 lines the Zn(2+) pocket. Glu144 is an active-site residue. His147 serves as a coordination point for Zn(2+). A run of 2 helical transmembrane segments spans residues 153–173 (IRISTIAVALASAITMLAVMA) and 198–218 (IILLIISLIAIILAPLAATLV). Glu227 is a binding site for Zn(2+).

This sequence belongs to the peptidase M48B family. Requires Zn(2+) as cofactor.

Its subcellular location is the cell membrane. This is Protease HtpX homolog from Streptococcus thermophilus (strain ATCC BAA-491 / LMD-9).